We begin with the raw amino-acid sequence, 202 residues long: FMN-dependent NADH:quinone oxidoreductase 2 (202 aa).

FMN-binding positions include S9, 15 to 17 (SAS), and 95 to 98 (MWNL).

The protein belongs to the azoreductase type 1 family. In terms of assembly, homodimer. It depends on FMN as a cofactor.

The catalysed reaction is 2 a quinone + NADH + H(+) = 2 a 1,4-benzosemiquinone + NAD(+). It carries out the reaction N,N-dimethyl-1,4-phenylenediamine + anthranilate + 2 NAD(+) = 2-(4-dimethylaminophenyl)diazenylbenzoate + 2 NADH + 2 H(+). Quinone reductase that provides resistance to thiol-specific stress caused by electrophilic quinones. Functionally, also exhibits azoreductase activity. Catalyzes the reductive cleavage of the azo bond in aromatic azo compounds to the corresponding amines. The chain is FMN-dependent NADH:quinone oxidoreductase 2 from Hahella chejuensis (strain KCTC 2396).